The sequence spans 147 residues: Large ribosomal subunit protein uL15 (147 aa).

Residues 1–42 (MTIKLHHLRPAPGSKSNKIRVGRGEGGKRGKTAGRGTKGTKA) form a disordered region.

Belongs to the universal ribosomal protein uL15 family. In terms of assembly, part of the 50S ribosomal subunit.

Functionally, binds to the 23S rRNA. This is Large ribosomal subunit protein uL15 from Rhodococcus erythropolis (strain PR4 / NBRC 100887).